Reading from the N-terminus, the 747-residue chain is H(+)/Cl(-) exchange transporter 4 (747 aa).

A required for localization in the endoplasmic reticulum region spans residues 1 to 50; it reads MDFLEEPFPDVGTYEDFHTIDWLREKSRDTDRHRKITSKSKESIWEFIKS. At 1–54 the chain is on the cytoplasmic side; the sequence is MDFLEEPFPDVGTYEDFHTIDWLREKSRDTDRHRKITSKSKESIWEFIKSLLDA. 2 consecutive transmembrane segments (helical) span residues 55–92 and 138–161; these read WSGWVVMLLIGLLAGTLAGVIDLAVDWMTDLKEGVCLS and LNYLMYILWALLFAFLAVSLVRVF. Positions 167–171 match the Selectivity filter part_1 motif; it reads GSGIP. Position 168 (Ser-168) interacts with chloride. An intramembrane region (helical) is located at residues 170–177; sequence IPEIKTIL. The next 2 helical transmembrane spans lie at 187-205 and 211-230; these read GKWTLLIKTVTLVLVVSSG and EGPLVHVACCCGNFFSSLFS. Positions 209-213 match the Selectivity filter part_2 motif; sequence GKEGP. Intramembrane regions (helical) lie at residues 242–254 and 258–266; these read VLSAAAAAGVSVA and PIGGVLFSL. The next 5 helical transmembrane spans lie at 278-296, 320-345, 352-372, 429-449, and 454-473; these read LWRSFFAALVAAFTLRSIN, FPFILLGVFGGLWGTLFTRCNIAWCR, LGRYPVLEVIAVTAVTAIVAY, MWQLALALIFKIVITIFTFGM, and GLFIPSMAVGAMAGRMVGIG. Positions 454 to 458 match the Selectivity filter part_3 motif; sequence GLFIP. Chloride is bound at residue Phe-456. Intramembrane regions (helical) lie at residues 501 to 515 and 519 to 530; these read GLYAMVGAAACLGGV and TVSLVVIMFELT. The note=Loop between two helices intramembrane region spans 531–534; that stretch reads GGLE. The chain crosses the membrane as a helical span at residues 535 to 553; the sequence is YIVPLMAAAVTSKWVADAF. Residues 554–747 lie on the Cytoplasmic side of the membrane; the sequence is GKEGIYEAHI…NQDPESIMFN (194 aa). Residue Tyr-559 participates in chloride binding. CBS domains follow at residues 587 to 653 and 680 to 742; these read MRPR…QRQE and LRRI…QDPE. Residues Ser-597 and 618–620 each bind ATP; that span reads YNG. Positions 654–683 are required for localization in the endoplasmic reticulum; it reads GIVSNSIMYFTEEPPELPANSPHPLKLRRI. Residue 725-728 participates in ATP binding; it reads TKKD.

It belongs to the chloride channel (TC 2.A.49) family. ClC-4/CLCN4 subfamily. Predominantly present in excitable tissues such as nervous system and skeletal muscle. Not detected in heart.

It is found in the early endosome membrane. The protein localises to the late endosome membrane. The protein resides in the endoplasmic reticulum membrane. Its subcellular location is the lysosome membrane. It localises to the recycling endosome membrane. In terms of biological role, strongly outwardly rectifying, electrogenic H(+)/Cl(-)exchanger which mediates the exchange of chloride ions against protons. The CLC channel family contains both chloride channels and proton-coupled anion transporters that exchange chloride or another anion for protons. The presence of conserved gating glutamate residues is typical for family members that function as antiporters. This Mus musculus (Mouse) protein is H(+)/Cl(-) exchange transporter 4 (Clcn4).